Here is a 302-residue protein sequence, read N- to C-terminus: Pyridoxal 5'-phosphate synthase subunit PdxS (302 aa).

Asp32 serves as a coordination point for D-ribose 5-phosphate. The Schiff-base intermediate with D-ribose 5-phosphate role is filled by Lys89. Gly161 provides a ligand contact to D-ribose 5-phosphate. Residue Arg173 participates in D-glyceraldehyde 3-phosphate binding. D-ribose 5-phosphate is bound by residues Gly222 and 243-244 (GS). Residues 275–302 (IAKNPGKGMKGQANADLDEEEQLQGRGV) are disordered.

It belongs to the PdxS/SNZ family. In terms of assembly, in the presence of PdxT, forms a dodecamer of heterodimers.

It catalyses the reaction aldehydo-D-ribose 5-phosphate + D-glyceraldehyde 3-phosphate + L-glutamine = pyridoxal 5'-phosphate + L-glutamate + phosphate + 3 H2O + H(+). It functions in the pathway cofactor biosynthesis; pyridoxal 5'-phosphate biosynthesis. In terms of biological role, catalyzes the formation of pyridoxal 5'-phosphate from ribose 5-phosphate (RBP), glyceraldehyde 3-phosphate (G3P) and ammonia. The ammonia is provided by the PdxT subunit. Can also use ribulose 5-phosphate and dihydroxyacetone phosphate as substrates, resulting from enzyme-catalyzed isomerization of RBP and G3P, respectively. In Haloarcula marismortui (strain ATCC 43049 / DSM 3752 / JCM 8966 / VKM B-1809) (Halobacterium marismortui), this protein is Pyridoxal 5'-phosphate synthase subunit PdxS.